Here is a 518-residue protein sequence, read N- to C-terminus: Probable cytochrome P450 317a1 (518 aa).

A heme-binding site is contributed by C461.

This sequence belongs to the cytochrome P450 family. Requires heme as cofactor.

The protein resides in the endoplasmic reticulum membrane. Its subcellular location is the microsome membrane. Functionally, may be involved in the metabolism of insect hormones and in the breakdown of synthetic insecticides. The chain is Probable cytochrome P450 317a1 (Cyp317a1) from Drosophila melanogaster (Fruit fly).